Here is a 511-residue protein sequence, read N- to C-terminus: uncharacterized protein (511 aa).

Positions 2–254 (LMDYEKERTE…NFQEKAPIHE (253 aa)) constitute a CoA carboxyltransferase N-terminal domain. The carboxyltransferase stretch occupies residues 2 to 506 (LMDYEKERTE…KEMTFTNRKH (505 aa)). In terms of domain architecture, CoA carboxyltransferase C-terminal spans 260-506 (HFETPLADVI…KEMTFTNRKH (247 aa)).

It belongs to the AccD/PCCB family.

This is an uncharacterized protein from Bacillus subtilis (strain 168).